A 179-amino-acid polypeptide reads, in one-letter code: Large ribosomal subunit protein uL5 (179 aa).

The protein belongs to the universal ribosomal protein uL5 family. As to quaternary structure, part of the 50S ribosomal subunit; part of the 5S rRNA/L5/L18/L25 subcomplex. Contacts the 5S rRNA and the P site tRNA. Forms a bridge to the 30S subunit in the 70S ribosome.

Functionally, this is one of the proteins that bind and probably mediate the attachment of the 5S RNA into the large ribosomal subunit, where it forms part of the central protuberance. In the 70S ribosome it contacts protein S13 of the 30S subunit (bridge B1b), connecting the 2 subunits; this bridge is implicated in subunit movement. Contacts the P site tRNA; the 5S rRNA and some of its associated proteins might help stabilize positioning of ribosome-bound tRNAs. The protein is Large ribosomal subunit protein uL5 of Dechloromonas aromatica (strain RCB).